Here is a 215-residue protein sequence, read N- to C-terminus: Eukaryotic translation initiation factor 4E-1 (215 aa).

Residues Met1–Gly35 are disordered. Residues Glu16–Asp27 show a composition bias toward acidic residues. EIF4G-binding regions lie at residues His40–Glu43 and Phe50–His86. MRNA is bound by residues Arg58–Gly63, Lys90, and Trp108–Glu109. Cys113 and Cys151 form a disulfide bridge. Residues His134–Gln143 form an EIF4G-binding region. MRNA is bound by residues Arg158–Arg163 and Lys203–Lys207.

The protein belongs to the eukaryotic initiation factor 4E family. As to quaternary structure, EIF4F is a multi-subunit complex, the composition of which varies with external and internal environmental conditions. It is composed of at least EIF4A, EIF4E and EIF4G. EIF4E is also known to interact with other partners. In higher plants two isoforms of EIF4F have been identified, named isoform EIF4F and isoform EIF(iso)4F. Isoform EIF4F has subunits p220 and p26, whereas isoform EIF(iso)4F has subunits p82 and p28. In terms of assembly, (Microbial infection) Interacts with potyvirus viral genome-linked protein (VPg); this interaction is possible in susceptible hosts but impaired in resistant plants. In terms of processing, according to the redox status, the Cys-113-Cys-151 disulfide bridge may have a role in regulating protein function by affecting its ability to bind capped mRNA.

The protein localises to the nucleus. Its subcellular location is the cytoplasm. In terms of biological role, component of the protein complex eIF4F, which is involved in the recognition of the mRNA cap, ATP-dependent unwinding of 5'-terminal secondary structure and recruitment of mRNA to the ribosome. Recognizes and binds the 7-methylguanosine-containing mRNA cap during an early step in the initiation of protein synthesis and facilitates ribosome binding by inducing the unwinding of the mRNAs secondary structures. Key component of recessive resistance to potyviruses and bymoviruses, including barley yellow mosaic virus and barley mild mosaic virus. Its function is as follows. (Microbial infection) Susceptibility host factor required for viral infection by recruiting viral RNAs to the host ribosomal complex via an interaction with viral genome-linked protein (VPg). The chain is Eukaryotic translation initiation factor 4E-1 from Hordeum vulgare subsp. vulgare (Domesticated barley).